Consider the following 394-residue polypeptide: Nuclear pore glycoprotein p62 (394 aa).

5 tandem repeats follow at residues 22-23 (FG), 50-51 (FG), 75-76 (FG), 77-78 (FG), and 116-117 (FG). Residues 22–117 (FGLSTGTPAA…GTSAAPPAFG (96 aa)) are 5 X 2 AA repeats of F-G. Over residues 45–57 (KTTFSFGTPAPTA) the composition is skewed to low complexity. Residues 45–73 (KTTFSFGTPAPTAGIGGGDADNSKAQAPP) form a disordered region. Residues 211–341 (SYHQLEEHIN…DNLNEANKGQ (131 aa)) are a coiled coil.

The protein belongs to the nucleoporin NSP1/NUP62 family. As to expression, expressed in adult male accessory glands (at protein level).

The protein localises to the nucleus. The protein resides in the chromosome. It is found in the nucleus envelope. It localises to the nuclear pore complex. Its subcellular location is the cytoplasm. The protein localises to the cytoskeleton. The protein resides in the spindle pole. It is found in the microtubule organizing center. It localises to the centrosome. Its function is as follows. Essential component of the nuclear pore complex. The N-terminal is probably involved in nucleocytoplasmic transport. The C-terminal is involved in protein-protein interaction probably via coiled-coil formation, promotes its association with centrosomes and may function in anchorage of Nup62 to the pore complex. Binds to transcriptionally active genes. Negatively regulates chromatin attachment to the nuclear envelope, probably by preventing chromatin tethering by Nup154. This chain is Nuclear pore glycoprotein p62, found in Drosophila melanogaster (Fruit fly).